Here is a 165-residue protein sequence, read N- to C-terminus: Deoxyuridine 5'-triphosphate nucleotidohydrolase (165 aa).

Belongs to the dUTPase family. Homotrimer. Mg(2+) is required as a cofactor.

The protein resides in the host cytoplasm. The protein localises to the virion. The catalysed reaction is dUTP + H2O = dUMP + diphosphate + H(+). Functionally, the viral dUTPase may play a role in lowering the dUTP concentration in natural infections to minimize misincorporation of deoxyuridine into the viral DNA and ensure the fidelity of genome replication. The polypeptide is Deoxyuridine 5'-triphosphate nucleotidohydrolase (Ornithodoros (relapsing fever ticks)).